Here is a 299-residue protein sequence, read N- to C-terminus: Deoxyhypusine hydroxylase (299 aa).

HEAT-like PBS-type repeat units follow at residues 54–80 (LKHE…VLQD), 87–113 (VRHE…YSED), 174–200 (DRYR…GLRA), 205–231 (FRHE…ALRS), and 238–264 (VRHE…FAQD). The Fe cation site is built by His-56, His-89, and Glu-90. Fe cation is bound by residues His-207, His-240, and Glu-241.

It belongs to the deoxyhypusine hydroxylase family. Requires Fe(2+) as cofactor.

It catalyses the reaction [eIF5A protein]-deoxyhypusine + AH2 + O2 = [eIF5A protein]-hypusine + A + H2O. It participates in protein modification; eIF5A hypusination. Its function is as follows. Catalyzes the hydroxylation of the N(6)-(4-aminobutyl)-L-lysine intermediate produced by deoxyhypusine synthase/DHPS on a critical lysine of the eukaryotic translation initiation factor 5A/eIF-5A. This is the second step of the post-translational modification of that lysine into an unusual amino acid residue named hypusine. Hypusination is unique to mature eIF-5A factor and is essential for its function. The chain is Deoxyhypusine hydroxylase from Gallus gallus (Chicken).